Here is a 211-residue protein sequence, read N- to C-terminus: Mitotic spindle assembly checkpoint protein MAD2B (211 aa).

One can recognise an HORMA domain in the interval 13-203; sequence QVVADVLSEF…SDILKMQLYV (191 aa).

As to quaternary structure, homooligomer. Interacts with REV1. Interacts with FZR1 (in complex with the anaphase promoting complex APC). May interact with CDC20. Heterodimer with REV3L. This dimer forms the minimal DNA polymerase zeta complex (Pol-zeta2), with REV3L bearing DNA polymerase catalytic activity, although its activity is very low in this context. Component of the tetrameric Pol-zeta complex (Pol-zeta4), which consists of REV3L, MAD2L2, POLD2 and POLD3; Pol-zeta4 is the fully active form of DNA polymerase zeta. Component of the shieldin complex, consisting of SHLD1, SHLD2, SHLD3 and MAD2L2/REV7. Within the complex, SHLD2 forms a scaffold which interacts with a SHLD3-MAD2L2 subcomplex via its N-terminus, and with SHLD1 via its C-terminus.

Its subcellular location is the nucleus. It localises to the cytoplasm. The protein resides in the cytoskeleton. It is found in the spindle. The protein localises to the chromosome. Adapter protein able to interact with different proteins and involved in different biological processes. Mediates the interaction between the error-prone DNA polymerase zeta catalytic subunit REV3L and the inserter polymerase REV1, thereby mediating the second polymerase switching in translesion DNA synthesis. Translesion DNA synthesis releases the replication blockade of replicative polymerases, stalled in presence of DNA lesions. May also play a role in signal transduction in response to DNA damage. May regulate the activation of the anaphase promoting complex APC thereby regulating progression through the cell cycle. Component of the shieldin complex, which plays an important role in repair of DNA double-stranded breaks (DSBs). During G1 and S phase of the cell cycle, the complex functions downstream of TP53BP1 to promote non-homologous end joining (NHEJ) and suppress DNA end resection. Through transcriptional regulation may play a role in epithelial-mesenchymal transdifferentiation. This chain is Mitotic spindle assembly checkpoint protein MAD2B (MAD2L2), found in Gallus gallus (Chicken).